A 179-amino-acid polypeptide reads, in one-letter code: UPF0227 protein Shewana3_2292 (179 aa).

It belongs to the UPF0227 family.

This chain is UPF0227 protein Shewana3_2292, found in Shewanella sp. (strain ANA-3).